We begin with the raw amino-acid sequence, 963 residues long: Seizure 6-like protein (963 aa).

The first 31 residues, Met-1–Ala-31, serve as a signal peptide directing secretion. Disordered stretches follow at residues Ala-28–Ser-63, Arg-116–Ala-150, and Leu-164–Ser-204. Topologically, residues Glu-32–Ala-897 are extracellular. Residues Leu-47–Glu-59 show a composition bias toward low complexity. Over residues Thr-120–Thr-135 the composition is skewed to polar residues. Over residues Thr-191–Ser-204 the composition is skewed to low complexity. Residues Cys-221 and Cys-248 are joined by a disulfide bond. Positions Cys-221–Phe-329 constitute a CUB 1 domain. N-linked (GlcNAc...) asparagine glycosylation is found at Asn-251, Asn-268, and Asn-290. One can recognise a Sushi 1 domain in the interval Leu-331 to Ala-390. Cystine bridges form between Cys-333–Cys-373, Cys-359–Cys-388, and Cys-392–Cys-419. N-linked (GlcNAc...) asparagine glycans are attached at residues Asn-375, Asn-398, Asn-414, Asn-454, Asn-516, and Asn-558. The region spanning Cys-392–Phe-502 is the CUB 2 domain. Residues Gly-505 to Ala-566 enclose the Sushi 2 domain. Cystine bridges form between Cys-507–Cys-549, Cys-534–Cys-564, and Cys-568–Cys-594. The 112-residue stretch at Cys-568–Val-679 folds into the CUB 3 domain. Asn-614 and Asn-682 each carry an N-linked (GlcNAc...) asparagine glycan. Sushi domains follow at residues Asp-683–Lys-742, Met-744–Ser-807, and Leu-811–Val-872. Disulfide bonds link Cys-685/Cys-727, Cys-713/Cys-740, Cys-746/Cys-788, Cys-774/Cys-805, Cys-813/Cys-855, and Cys-841/Cys-870. The helical transmembrane segment at Leu-898–Val-918 threads the bilayer. The Cytoplasmic portion of the chain corresponds to Thr-919–Ile-963.

The protein belongs to the SEZ6 family. Expressed exclusively in the brain, predominantly in neurons. Wide expression in the gray matter of the brain with high levels in the olfactory bulb, anterior olfactory nuclei, hippocampal formation and cerebellar cortex. Detected diffusely and weakly in the white matter, such as the corpus callosum and cerebellar medulla. In the cerebellar cortex, intensely expressed in Purkinje cells and granule cells. Detected also in interneurons in the molecular layer.

It localises to the cell membrane. Its subcellular location is the endoplasmic reticulum membrane. In terms of biological role, candidate tumor suppressor gene. May contribute to specialized endoplasmic reticulum functions in neurons. The sequence is that of Seizure 6-like protein (Sez6l) from Mus musculus (Mouse).